A 141-amino-acid chain; its full sequence is Lutropin subunit beta (141 aa).

Positions 1–20 are cleaved as a signal peptide; sequence MEMLQGLLLWLLLSVGGVWA. 6 cysteine pairs are disulfide-bonded: cysteine 29–cysteine 77, cysteine 43–cysteine 92, cysteine 46–cysteine 130, cysteine 54–cysteine 108, cysteine 58–cysteine 110, and cysteine 113–cysteine 120. N-linked (GlcNAc...) asparagine glycosylation is present at asparagine 33.

Belongs to the glycoprotein hormones subunit beta family. As to quaternary structure, heterodimer of a common alpha chain and a unique beta chain which confers biological specificity to thyrotropin, lutropin, follitropin and gonadotropin.

The protein resides in the secreted. In terms of biological role, promotes spermatogenesis and ovulation by stimulating the testes and ovaries to synthesize steroids. The protein is Lutropin subunit beta (LHB1) of Ceratotherium simum (White rhinoceros).